The following is a 678-amino-acid chain: THO complex subunit 5 homolog A (678 aa).

Disordered regions lie at residues 1 to 35 (MASD…YSEE) and 294 to 329 (ALFK…VQLD). The short motif at 7–10 (KKRK) is the Nuclear localization signal element. The segment covering 14–35 (NRNEDVKRGRHEDQEGRYYSEE) has biased composition (basic and acidic residues). A compositionally biased stretch (acidic residues) spans 301 to 314 (DSQDDESDSDAEEE).

It belongs to the THOC5 family. In terms of assembly, component of the THO subcomplex, which is composed of thoc1, thoc2, thoc3, thoc5, thoc6 and thoc7. Component of the transcription/export (TREX) complex at least composed of alyref/thoc4, ddx39b, sarnp/cip29, chtop and the THO subcomplex. Interacts with thoc7.

The protein resides in the nucleus. It is found in the nucleus speckle. Its subcellular location is the cytoplasm. Its function is as follows. Component of the THO subcomplex of the TREX complex which is thought to couple mRNA transcription, processing and nuclear export, and which specifically associates with spliced mRNA and not with unspliced pre-mRNA. Plays a key structural role in the oligomerization of the THO-ddx39b complex. TREX is recruited to spliced mRNAs by a transcription-independent mechanism, binds to mRNA upstream of the exon-junction complex (EJC) and is recruited in a splicing- and cap-dependent manner to a region near the 5' end of the mRNA where it functions in mRNA export to the cytoplasm via the TAP/NXF1 pathway. May be involved in cell differentiation. This chain is THO complex subunit 5 homolog A (thoc5-a), found in Xenopus laevis (African clawed frog).